Here is a 182-residue protein sequence, read N- to C-terminus: Large ribosomal subunit protein uL5 (182 aa).

The protein belongs to the universal ribosomal protein uL5 family. In terms of assembly, part of the 50S ribosomal subunit; part of the 5S rRNA/L5/L18/L25 subcomplex. Contacts the 5S rRNA and the P site tRNA. Forms a bridge to the 30S subunit in the 70S ribosome.

Its function is as follows. This is one of the proteins that bind and probably mediate the attachment of the 5S RNA into the large ribosomal subunit, where it forms part of the central protuberance. In the 70S ribosome it contacts protein S13 of the 30S subunit (bridge B1b), connecting the 2 subunits; this bridge is implicated in subunit movement. Contacts the P site tRNA; the 5S rRNA and some of its associated proteins might help stabilize positioning of ribosome-bound tRNAs. The protein is Large ribosomal subunit protein uL5 of Thermus thermophilus (strain ATCC BAA-163 / DSM 7039 / HB27).